Reading from the N-terminus, the 276-residue chain is F420-dependent methylenetetrahydromethanopterin dehydrogenase (276 aa).

It belongs to the MTD family.

The enzyme catalyses 5,10-methylenetetrahydromethanopterin + oxidized coenzyme F420-(gamma-L-Glu)(n) + 2 H(+) = 5,10-methenyl-5,6,7,8-tetrahydromethanopterin + reduced coenzyme F420-(gamma-L-Glu)(n). Catalyzes the oxidation of methylene-H(4)MPT to methenyl-H(4)MPT(+). The sequence is that of F420-dependent methylenetetrahydromethanopterin dehydrogenase from Methanosphaera stadtmanae (strain ATCC 43021 / DSM 3091 / JCM 11832 / MCB-3).